The primary structure comprises 237 residues: Pheromone-regulated membrane protein 8 (237 aa).

Residues 1–47 are Cytoplasmic-facing; the sequence is MQTPSENTNAKSDSLDEPGAYLIEENVALPKDIFHSYLSYWIYEAAH. A helical transmembrane segment spans residues 48 to 68; it reads CTPVMLLSLVIGVLISIIILF. At 69-74 the chain is on the extracellular side; it reads HDNENC. A helical transmembrane segment spans residues 75–95; sequence VGVSVGFLLIFSGILVIVLIL. At 96–237 the chain is on the cytoplasmic side; it reads RFGPQISDED…QEYPGVDEFF (142 aa). Residues 174-201 form a disordered region; that stretch reads SSASNVKDAQSNDETAGTPNEAAESSSF. A COPII binding region spans residues 236–237; sequence FF.

Belongs to the DUP/COS family. As to quaternary structure, interacts with PRM9. Binds to SEC23/24 of COPII coated vesicles.

The protein resides in the membrane. Its subcellular location is the endoplasmic reticulum. May be involved in endoplasmic reticulum exit trafficking of proteins. This Saccharomyces cerevisiae (strain ATCC 204508 / S288c) (Baker's yeast) protein is Pheromone-regulated membrane protein 8 (PRM8).